The chain runs to 497 residues: B3 domain-containing protein REM1 (497 aa).

DNA-binding regions (TF-B3) lie at residues 7–92, 142–239, and 278–379; these read PSLF…SSES, FLRA…LCSH, and FLTQ…HSKI. A disordered region spans residues 87–135; it reads AVSSESDDDESDDTDDSESDDESNDTDDSESDDSEDNGEGDSSLVNKEA. Positions 91-125 are enriched in acidic residues; the sequence is ESDDDESDDTDDSESDDESNDTDDSESDDSEDNGE.

In terms of tissue distribution, specifically expressed in the reproductive meristem.

Its subcellular location is the nucleus. In terms of biological role, may play a role in flower development. The chain is B3 domain-containing protein REM1 (REM1) from Brassica oleracea var. botrytis (Cauliflower).